The sequence spans 1068 residues: MAELTNYKDAASNRHLRFKLQSLSRRLDELEEATKNLQRAEDELLDLQDKVIQAEGSDSSTLAEIEVLRQRVLKIEGKDEEIKRAEDLCHTMKEKLEEEENLTRELKSEIERLQKRMVDLEKLEEALSRSKNECSQLCLSLNEERNLTKKISSELEMLRVKVKELESSEDRLDKTEQSLVSELEKLKSLTLSFVNERKYLNEKEKENEKIIKELTQKLEQNKKMNRDHMRNASTFLERNDLRIEDGISSTLSSKESKRKGSLDYLKQVENETRDKSENEKNRNQEDNKVKDLNQEIEKLKTQIKHFESLEEELKKMRAKNNDLQDNYLTELNRNRSLASQLEEIKLQVRKQKELGNGDIEGEDAFLLGRGRHERTKLKGHGSEASVSKHTSRELSPQHKRERLRNREFALSNEHYSLSSKQASSPVFTNKRAAKASNMGMGTDSGTQETKRTEDRFAPGSSHSEGKRGREQPSVLSRYPPAAQEHTKVWKGAPKPGTESGLKGKVEKTTRTFSDSTHVSVPNDIVGKGDKTSDLSSEAHCGKRGQVPGHASQGTQAVESSCSKAIGALSSSQKASSEGLSKGKKTANGLAADANFSNSKAPILSKYPYSSRSQENILQGFSLPNKEGVDQPVAVVMEDSSQHEALRCRVIKSSGREKPDSDDDLDIESFVTAKLVNTTITPEPEPKPQPNSREKVKSRGGTRTALFENDKNAAIENDSVKPTRPSSNAIEFPDANCAGVKNQRPFSPREALRSRAIIKPVIIDKDVKKIMGGSGTEVVLEKQKSTSKSVTSKVTSSITIYPSDSSGPRAVPSEAPRERHTSTSNIQVGPPELTAISNHVSSPLELSIHKHDITLQLTEAERVGDGSPKNRAEMVVSRSSILIKPSESVEKNSHVPPAETIRWKSHSASSDSRHITVRNAWKSKRDLKCSEDPPTGIGRNMEATNAYTQRPCTDFLELEQPRSQPSEQGARRVGNSGDAPELSPRRTQSSLTASEVLTRRDRMGGAITAASCNHSSSMEEGEDSTFVTSRRIHNPLEHSELPGKQGLPEPEPVWTEERLHPAKPYAEED.

Position 2 is an N-acetylalanine (Ala2). Residues Ala11–Leu354 adopt a coiled-coil conformation. Disordered regions lie at residues Leu251 to Leu292, Thr375 to Arg402, and Ala432 to Glu558. Residues Lys254–Leu292 are compositionally biased toward basic and acidic residues. A phosphoserine mark is found at Ser256, Ser261, Ser395, Ser513, Ser571, Ser575, Ser612, and Ser660. A compositionally biased stretch (polar residues) spans Arg510 to Ser519. The disordered stretch occupies residues Thr677 to Gly700. Thr680 bears the Phosphothreonine mark. Phosphoserine occurs at positions 691 and 746. The disordered stretch occupies residues Gln782 to Pro829. A compositionally biased stretch (low complexity) spans Thr785 to Ser796. The interval Ala834–Pro884 is required for interaction with FLNA. At Ser906 the chain carries Phosphoserine. Positions Arg924 to Ala945 are disordered. Thr952 is modified (phosphothreonine). Disordered regions lie at residues Gln959–Val995 and Asn1033–Asp1068. The span at Arg984–Glu994 shows a compositional bias: polar residues. Phosphoserine is present on Ser988.

In terms of assembly, component of the CERF-1 ISWI chromatin remodeling complex (also called the CECR2-containing remodeling factor (CERF) complex) at least composed of CECR2 and SMARCA1. Component of the CERF-5 ISWI chromatin remodeling complex at least composed of CECR2 and SMARCA5/SNF2H. LUZP1 is detected as part of the CERF-1 and CERF-5 complexes in embryonic stem (ES) cells where it is involved in complex stabilization but is not detected in the complexes in the testis. Interacts (via C-terminus) with LIMA1/EPLIN; both proteins restrict ciliation and may work together to regulate this process. Interacts with myosin light chain MYL9; the interaction results in inhibition of phosphorylation of MYL9 by DAPK3. Interacts with DAPK3; the interaction is likely to occur throughout the cell cycle and reduces the LUZP1-mediated suppression of MYL9 phosphorylation. Interacts with the chromosomal passenger complex (CPC); CPC kinase activity is required for localization of LUZP1 to the centromere. Predominantly expressed in the brain (at protein level).

The protein resides in the cytoplasm. The protein localises to the cytoskeleton. It localises to the microtubule organizing center. It is found in the centrosome. Its subcellular location is the cilium basal body. The protein resides in the midbody. The protein localises to the chromosome. It localises to the centromere. It is found in the spindle. Its subcellular location is the stress fiber. The protein resides in the nucleus. The protein localises to the cell projection. It localises to the dendrite. It is found in the perikaryon. Its subcellular location is the cell junction. The protein resides in the tight junction. Functionally, F-actin cross-linking protein. Stabilizes actin and acts as a negative regulator of primary cilium formation. Positively regulates the phosphorylation of both myosin II and protein phosphatase 1 regulatory subunit PPP1R12A/MYPT1 and promotes the assembly of myosin II stacks within actin stress fibers. Inhibits the phosphorylation of myosin light chain MYL9 by DAPK3 and suppresses the constriction velocity of the contractile ring during cytokinesis. Binds to microtubules and promotes epithelial cell apical constriction by up-regulating levels of diphosphorylated myosin light chain (MLC) through microtubule-dependent inhibition of MLC dephosphorylation by myosin phosphatase. Involved in regulation of cell migration, nuclear size and centriole number, probably through regulation of the actin cytoskeleton. Component of the CERF-1 and CERF-5 chromatin remodeling complexes in embryonic stem cells where it acts to stabilize the complexes. Plays a role in embryonic brain and cardiovascular development. This Mus musculus (Mouse) protein is Leucine zipper protein 1 (Luzp1).